The sequence spans 369 residues: IST1-like protein (369 aa).

Positions 12–59 (KLKVQLKLAVSRIQILKNKKANIVRDEKRNVAELLRKKNEESARIRVE) form a coiled coil. The segment at 224-354 (QIIQQQQQPQ…SSDTGYPDYD (131 aa)) is disordered. 2 stretches are compositionally biased toward low complexity: residues 225-239 (IIQQ…SFPI) and 246-270 (PTFS…SPQF). Residues 277-305 (FYNNNSGNQTPQFPTISTNNSDGYSNDKF) are compositionally biased toward polar residues. Positions 306-337 (NNGNNNYNNNNNNNNNNNNNNNHNNNNNNNNN) are enriched in low complexity.

The protein belongs to the IST1 family.

The chain is IST1-like protein from Dictyostelium discoideum (Social amoeba).